A 526-amino-acid polypeptide reads, in one-letter code: Ferrochelatase-2, chloroplastic (526 aa).

The protein belongs to the ferrochelatase family.

Its subcellular location is the plastid. The protein localises to the chloroplast. The enzyme catalyses heme b + 2 H(+) = protoporphyrin IX + Fe(2+). Its pathway is porphyrin-containing compound metabolism; protoheme biosynthesis; protoheme from protoporphyrin-IX: step 1/1. Functionally, catalyzes the ferrous insertion into protoporphyrin IX. The chain is Ferrochelatase-2, chloroplastic from Oryza sativa subsp. japonica (Rice).